The sequence spans 332 residues: 2,3-diketo-L-gulonate reductase (332 aa).

Catalysis depends on H44, which acts as the Proton donor. NAD(+)-binding positions include 168-174, 224-225, and 304-306; these read ITMVDMS, WK, and GHE.

The protein belongs to the LDH2/MDH2 oxidoreductase family. DlgD subfamily. In terms of assembly, homodimer.

Its subcellular location is the cytoplasm. It carries out the reaction 3-dehydro-L-gulonate + NAD(+) = 2,3-dioxo-L-gulonate + NADH + H(+). It catalyses the reaction 3-dehydro-L-gulonate + NADP(+) = 2,3-dioxo-L-gulonate + NADPH + H(+). Catalyzes the reduction of 2,3-diketo-L-gulonate in the presence of NADH, to form 3-keto-L-gulonate. The sequence is that of 2,3-diketo-L-gulonate reductase from Escherichia coli O127:H6 (strain E2348/69 / EPEC).